Here is an 846-residue protein sequence, read N- to C-terminus: MILERNRRCQLALLMIAILAAIAGQTDAQKAAKLTAVSTCASKEKCHTCIQTEGCAWCMQPDFKGQSRCYQNTSSLCPEEFAYSPITVEQILVNNKLTNQYKAELAAGGGGSAMSGSSSSSYSSSSSSSSFYSQSSSGSSSASGYEEYSAGEIVQIQPQSMRLALRVNEKHNIKISYSQAEGYPVDLYYLMDLSKSMEDDKAKLSTLGDKLSETMKRITNNFHLGFGSFVDKVLMPYVSTIPKKLEHPCENCKAPYGYQNHMPLNNNTESFSNEVKNATVSGNLDAPEGGFDAIMQAIACRSQIGWREQARRLLVFSTDAGFHYAGDGKLGGVIAPNDGECHLSPKGEYTHSTLQDYPSISQINQKVKDNAINIIFAVTASQLSVYEKLVEHIQGSSAAKLDNDSSNVVELVKEEYRKISSSVEMKDNATGDVKITYFSSCLSNGPEVQTSKCDNLKEGQQVSFTAQIQLLKCPEDPRDWTQTIHISPVGINEVMQIQLTMLCSCPCENPGSIGYQVQANSCSGHGTSMCGICNCDDSYFGNKCECSATDLTSKFANDTSCRADSTSTTDCSGRGHCVCGACECHKRPNPIEIISGKHCECDNFSCERNRNQLCSGPDHGTCECGRCKCKPGWTGSNCGCQESNDTCMPPGGGEICSGHGTCECGVCKCTVNDQGRFSGRHCEKCPTCSGRCQELKDCVQCQMYKTGELKNGDDCARNCTQFVPVGVEKVEIDETKDEQMCKFFDEDDCKFMFKYSEQGELHVYAQENKECPAKVFMLGIVMGVIAAIVLVGLAILLLWKLLTTIHDRREFARFEKERMNAKWDTGENPIYKQATSTFKNPMYAGK.

A signal peptide spans 1 to 28 (MILERNRRCQLALLMIAILAAIAGQTDA). Topologically, residues 29–777 (QKAAKLTAVS…NKECPAKVFM (749 aa)) are extracellular. C46 and C55 are oxidised to a cystine. N72 is a glycosylation site (N-linked (GlcNAc...) asparagine). The VWFA domain maps to 186–419 (DLYYLMDLSK…ELVKEEYRKI (234 aa)). C249 and C252 are oxidised to a cystine. N-linked (GlcNAc...) asparagine glycosylation is found at N266 and N277. C300 and C341 form a disulfide bridge. 2 N-linked (GlcNAc...) asparagine glycosylation sites follow: N403 and N428. Cystine bridges form between C441/C453, C473/C741, C507/C530, C522/C533, C535/C544, C546/C579, C561/C577, C571/C582, C584/C599, C601/C624, C606/C622, C614/C627, C629/C638, C640/C664, C647/C662, C656/C667, C669/C682, C685/C688, C692/C701, C698/C771, and C719/C749. 4 I-EGF domains span residues 507–545 (CENP…NKCE), 546–600 (CSAT…KHCE), 601–639 (CDNF…SNCG), and 640–683 (CQES…RHCE). N557 carries an N-linked (GlcNAc...) asparagine glycan. An N-linked (GlcNAc...) asparagine glycan is attached at N603. N644 is a glycosylation site (N-linked (GlcNAc...) asparagine). The N-linked (GlcNAc...) asparagine glycan is linked to N718. Residues 778-798 (LGIVMGVIAAIVLVGLAILLL) traverse the membrane as a helical segment. The Cytoplasmic portion of the chain corresponds to 799-846 (WKLLTTIHDRREFARFEKERMNAKWDTGENPIYKQATSTFKNPMYAGK). Y831 and Y843 each carry phosphotyrosine.

It belongs to the integrin beta chain family. In terms of assembly, heterodimer of an alpha and a beta subunit. Beta-PS associates with either alpha-PS1, alpha-PS2, alpha-PS3, alpha-PS4 or alpha-PS5. As to expression, in ovaries, strongly expressed in follicle cells. In oocytes, expressed in the forming dorsal appendages (at protein level). Expressed in the embryonic dorsal cuticle, the larval eye and the wing imaginal disk. In testes, detected at the interface between somatic hub cells and cyst stem cells.

The protein resides in the cell membrane. Its subcellular location is the apical cell membrane. It localises to the lateral cell membrane. It is found in the basal cell membrane. Integrin alpha-PS1/beta-PS is a receptor for laminin. Integrin alpha-PS2/beta-PS is a receptor for Tig, wb and Ten-m. Contributes to endodermal integrity and adhesion between the midgut epithelium and the surrounding visceral muscle. Essential for migration of the primordial midgut cells and for maintaining, but not establishing, cell polarity in the midgut epithelium. The two beta subunits mediate midgut migration by distinct mechanisms: beta-PS requires rhea/talin and Itgbn does not. Required for rhea/talin correct cellular localization in the midgut. Required for many embryonic (dorsal closure and somatic muscle attachments) and postembryonic developmental processes (attachment between cell layers of imaginal disks, organization of ommatidial arrays and flight muscle development). Involved in the function and/or development of the olfactory system. In the testes, essential for shv-dependent maintenance of somatic hub cells and their localization to the apical tip. Plays a role in timely border cell migration during oogenesis. The sequence is that of Integrin beta-PS (mys) from Drosophila melanogaster (Fruit fly).